The chain runs to 468 residues: uncharacterized protein (468 aa).

The TRAM domain maps to 3–61; it reads TFANGMTLDVTVDALAPGGKAVCRHEGRVIFVDRGLPGQQLHVRLTTVRKRFAEAECLA. [4Fe-4S] cluster-binding residues include Cys74, Cys80, Cys83, and Cys162. Residues Gln288, Tyr317, Glu338, and Asp389 each coordinate S-adenosyl-L-methionine. Cys416 functions as the Nucleophile in the catalytic mechanism.

This sequence belongs to the class I-like SAM-binding methyltransferase superfamily. RNA M5U methyltransferase family.

This is an uncharacterized protein from Nitratidesulfovibrio vulgaris (strain ATCC 29579 / DSM 644 / CCUG 34227 / NCIMB 8303 / VKM B-1760 / Hildenborough) (Desulfovibrio vulgaris).